We begin with the raw amino-acid sequence, 234 residues long: Orotidine 5'-phosphate decarboxylase (234 aa).

Substrate is bound by residues Asp14, Lys36, 63-72 (DLKFHDIPNT), Thr123, Arg184, Gln193, Gly213, and Arg214. The active-site Proton donor is the Lys65.

The protein belongs to the OMP decarboxylase family. Type 1 subfamily. Homodimer.

It carries out the reaction orotidine 5'-phosphate + H(+) = UMP + CO2. The protein operates within pyrimidine metabolism; UMP biosynthesis via de novo pathway; UMP from orotate: step 2/2. Its function is as follows. Catalyzes the decarboxylation of orotidine 5'-monophosphate (OMP) to uridine 5'-monophosphate (UMP). This Psychromonas ingrahamii (strain DSM 17664 / CCUG 51855 / 37) protein is Orotidine 5'-phosphate decarboxylase.